Here is a 531-residue protein sequence, read N- to C-terminus: RNA-binding protein RO60 (531 aa).

One can recognise a TROVE domain in the interval 24 to 360 (VRNNAGGFVY…AFGNVQPANT (337 aa)). The RNA-binding stretch occupies residues 128-274 (RTGTMLLHFL…TNGLTWLLRN (147 aa)). The VWFA-like domain stretch occupies residues 352–531 (FGNVQPANTR…VMTAFARGEV (180 aa)). Residues serine 369, serine 371, and threonine 438 each contribute to the a divalent metal cation site.

Belongs to the Ro 60 kDa family. As to quaternary structure, forms oligomers upon binding DrY RNA, The multimers are of an average size of 700 kDa and are composed of around 12 molecules of Rsr-DrY RNA.

Its subcellular location is the cytoplasm. Its function is as follows. Binds to several small RNAs that accumulate during recovery from UV irradiation. Contributes to the resistance of D.radiodurans to ultraviolet irradiation. The sequence is that of RNA-binding protein RO60 from Deinococcus radiodurans (strain ATCC 13939 / DSM 20539 / JCM 16871 / CCUG 27074 / LMG 4051 / NBRC 15346 / NCIMB 9279 / VKM B-1422 / R1).